The chain runs to 392 residues: Stilbene synthase 5 (392 aa).

55 to 58 (KFNR) serves as a coordination point for substrate. Residue C164 is part of the active site. Residues L267 and 305 to 307 (GGP) contribute to the substrate site.

It belongs to the thiolase-like superfamily. Chalcone/stilbene synthases family. As to quaternary structure, homodimer.

The protein localises to the cytoplasm. The enzyme catalyses 4-coumaroyl-CoA + 3 malonyl-CoA + 3 H(+) = trans-resveratrol + 4 CO2 + 4 CoA. It participates in phytoalexin biosynthesis; 3,4',5-trihydroxystilbene biosynthesis; 3,4',5-trihydroxystilbene from trans-4-coumarate: step 2/2. Functionally, mediates resistance to pathogens which are sensitive to stilbenes. The sequence is that of Stilbene synthase 5 from Vitis vinifera (Grape).